Here is a 124-residue protein sequence, read N- to C-terminus: Small ribosomal subunit protein eS6 (124 aa).

It belongs to the eukaryotic ribosomal protein eS6 family.

The polypeptide is Small ribosomal subunit protein eS6 (Thermoplasma acidophilum (strain ATCC 25905 / DSM 1728 / JCM 9062 / NBRC 15155 / AMRC-C165)).